A 428-amino-acid chain; its full sequence is Ectoine/5-hydroxyectoine TRAP transporter large permease protein UehC (428 aa).

The next 12 helical transmembrane spans lie at M9 to I29, L49 to I69, A99 to I119, A139 to I159, F172 to I192, A217 to S237, A242 to L262, G273 to I293, I302 to I322, F324 to F344, V366 to F386, and F400 to F420.

Belongs to the TRAP transporter large permease family. The complex comprises the extracytoplasmic solute receptor protein UehA, and the two transmembrane proteins UehB and UehC.

The protein resides in the cell inner membrane. In terms of biological role, part of the tripartite ATP-independent periplasmic (TRAP) transport system UehABC, which imports both ectoine and 5-hydroxyectoine as nutrients, and not as osmoprotectants. In Ruegeria pomeroyi (strain ATCC 700808 / DSM 15171 / DSS-3) (Silicibacter pomeroyi), this protein is Ectoine/5-hydroxyectoine TRAP transporter large permease protein UehC.